The primary structure comprises 878 residues: Valine--tRNA ligase (878 aa).

Positions 45–55 match the 'HIGH' region motif; sequence PNVTGQLHMGH. The short motif at 524-528 is the 'KMSKS' region element; the sequence is KMSKS. Lys-527 lines the ATP pocket. The stretch at 804–871 forms a coiled coil; that stretch reads PLKDLIDLEK…REKEVLEQRI (68 aa).

This sequence belongs to the class-I aminoacyl-tRNA synthetase family. ValS type 1 subfamily. In terms of assembly, monomer.

Its subcellular location is the cytoplasm. It carries out the reaction tRNA(Val) + L-valine + ATP = L-valyl-tRNA(Val) + AMP + diphosphate. In terms of biological role, catalyzes the attachment of valine to tRNA(Val). As ValRS can inadvertently accommodate and process structurally similar amino acids such as threonine, to avoid such errors, it has a 'posttransfer' editing activity that hydrolyzes mischarged Thr-tRNA(Val) in a tRNA-dependent manner. This chain is Valine--tRNA ligase, found in Carboxydothermus hydrogenoformans (strain ATCC BAA-161 / DSM 6008 / Z-2901).